The chain runs to 322 residues: 4-diphosphocytidyl-2-C-methyl-D-erythritol kinase (322 aa).

Lys25 is a catalytic residue. 110–120 (PVAGGMAGGSA) serves as a coordination point for ATP. The active site involves Asp152.

Belongs to the GHMP kinase family. IspE subfamily.

It carries out the reaction 4-CDP-2-C-methyl-D-erythritol + ATP = 4-CDP-2-C-methyl-D-erythritol 2-phosphate + ADP + H(+). It participates in isoprenoid biosynthesis; isopentenyl diphosphate biosynthesis via DXP pathway; isopentenyl diphosphate from 1-deoxy-D-xylulose 5-phosphate: step 3/6. Its function is as follows. Catalyzes the phosphorylation of the position 2 hydroxy group of 4-diphosphocytidyl-2C-methyl-D-erythritol. The polypeptide is 4-diphosphocytidyl-2-C-methyl-D-erythritol kinase (Mycolicibacterium vanbaalenii (strain DSM 7251 / JCM 13017 / BCRC 16820 / KCTC 9966 / NRRL B-24157 / PYR-1) (Mycobacterium vanbaalenii)).